The chain runs to 106 residues: uncharacterized protein (106 aa).

It belongs to the HesB/IscA family.

This is an uncharacterized protein from Bradyrhizobium diazoefficiens (strain JCM 10833 / BCRC 13528 / IAM 13628 / NBRC 14792 / USDA 110).